The chain runs to 396 residues: S-adenosylmethionine synthase 4 (396 aa).

Glutamate 12 serves as a coordination point for Mg(2+). Histidine 18 contributes to the ATP binding site. A K(+)-binding site is contributed by glutamate 46. L-methionine-binding residues include glutamate 59 and glutamine 102. ATP is bound by residues 170-172, 238-241, aspartate 249, 255-256, alanine 272, lysine 276, and lysine 280; these read DGK, SGRF, and RK. Aspartate 249 contributes to the L-methionine binding site. Residue lysine 280 participates in L-methionine binding.

Belongs to the AdoMet synthase family. Homotetramer. Mn(2+) serves as cofactor. It depends on Mg(2+) as a cofactor. The cofactor is Co(2+). K(+) is required as a cofactor.

The protein resides in the cytoplasm. It catalyses the reaction L-methionine + ATP + H2O = S-adenosyl-L-methionine + phosphate + diphosphate. Its pathway is amino-acid biosynthesis; S-adenosyl-L-methionine biosynthesis; S-adenosyl-L-methionine from L-methionine: step 1/1. Functionally, catalyzes the formation of S-adenosylmethionine from methionine and ATP. The reaction comprises two steps that are both catalyzed by the same enzyme: formation of S-adenosylmethionine (AdoMet) and triphosphate, and subsequent hydrolysis of the triphosphate. In Hordeum vulgare (Barley), this protein is S-adenosylmethionine synthase 4 (SAM4).